Here is a 269-residue protein sequence, read N- to C-terminus: 4-hydroxy-tetrahydrodipicolinate reductase (269 aa).

NAD(+) is bound by residues 9 to 14, aspartate 35, 102 to 104, and 128 to 131; these read GCAGKM, GTT, and APNF. Histidine 158 acts as the Proton donor/acceptor in catalysis. Position 159 (histidine 159) interacts with (S)-2,3,4,5-tetrahydrodipicolinate. The active-site Proton donor is lysine 162. 168-169 contacts (S)-2,3,4,5-tetrahydrodipicolinate; the sequence is GT.

This sequence belongs to the DapB family.

The protein localises to the cytoplasm. It catalyses the reaction (S)-2,3,4,5-tetrahydrodipicolinate + NAD(+) + H2O = (2S,4S)-4-hydroxy-2,3,4,5-tetrahydrodipicolinate + NADH + H(+). The catalysed reaction is (S)-2,3,4,5-tetrahydrodipicolinate + NADP(+) + H2O = (2S,4S)-4-hydroxy-2,3,4,5-tetrahydrodipicolinate + NADPH + H(+). Its pathway is amino-acid biosynthesis; L-lysine biosynthesis via DAP pathway; (S)-tetrahydrodipicolinate from L-aspartate: step 4/4. Functionally, catalyzes the conversion of 4-hydroxy-tetrahydrodipicolinate (HTPA) to tetrahydrodipicolinate. The sequence is that of 4-hydroxy-tetrahydrodipicolinate reductase from Gloeobacter violaceus (strain ATCC 29082 / PCC 7421).